The following is a 259-amino-acid chain: MRKTFFRLCFELSSHPVLSSMLQAFTTSKASRWLIPSFVRVYNINGQEAEKPLHTYQSLQEVFTRTLTENCRPIDLSPKSIVSPVDGVLAEQGTLSDEANFVVKNQTYTLEEMLGGKEKAKLYREGTYLLFYLSPSHYHRIHSPVNGTIKEQWTLGNKSAPVNNLGLRYGKRPLSRNYRLLTELEAEEGRCIVAKIGALNVNSIVPTHQSEHVDKGEEIGYFAFGSSVMLFFEKGTIQLDHQPRAVEVKMGEKVGSWLR.

Active-site charge relay system; for autoendoproteolytic cleavage activity residues include Asp-86, His-142, and Ser-226. Residue Ser-226 is the Schiff-base intermediate with substrate; via pyruvic acid; for decarboxylase activity of the active site. Ser-226 bears the Pyruvic acid (Ser); by autocatalysis mark.

It belongs to the phosphatidylserine decarboxylase family. PSD-B subfamily. Prokaryotic type I sub-subfamily. In terms of assembly, heterodimer of a large membrane-associated beta subunit and a small pyruvoyl-containing alpha subunit. It depends on pyruvate as a cofactor. Is synthesized initially as an inactive proenzyme. Formation of the active enzyme involves a self-maturation process in which the active site pyruvoyl group is generated from an internal serine residue via an autocatalytic post-translational modification. Two non-identical subunits are generated from the proenzyme in this reaction, and the pyruvate is formed at the N-terminus of the alpha chain, which is derived from the carboxyl end of the proenzyme. The autoendoproteolytic cleavage occurs by a canonical serine protease mechanism, in which the side chain hydroxyl group of the serine supplies its oxygen atom to form the C-terminus of the beta chain, while the remainder of the serine residue undergoes an oxidative deamination to produce ammonia and the pyruvoyl prosthetic group on the alpha chain. During this reaction, the Ser that is part of the protease active site of the proenzyme becomes the pyruvoyl prosthetic group, which constitutes an essential element of the active site of the mature decarboxylase.

The protein localises to the cell membrane. The enzyme catalyses a 1,2-diacyl-sn-glycero-3-phospho-L-serine + H(+) = a 1,2-diacyl-sn-glycero-3-phosphoethanolamine + CO2. It participates in phospholipid metabolism; phosphatidylethanolamine biosynthesis; phosphatidylethanolamine from CDP-diacylglycerol: step 2/2. Functionally, catalyzes the formation of phosphatidylethanolamine (PtdEtn) from phosphatidylserine (PtdSer). In Halalkalibacterium halodurans (strain ATCC BAA-125 / DSM 18197 / FERM 7344 / JCM 9153 / C-125) (Bacillus halodurans), this protein is Phosphatidylserine decarboxylase proenzyme.